The chain runs to 837 residues: CoA-transferase/lyase DddD (837 aa).

Aspartate 602 (nucleophile) is an active-site residue.

This sequence belongs to the CoA-transferase III family.

In terms of biological role, dimethyl sulfide (DMS)-producing enzyme. Acts both as a transferase and a lyase: uses acetyl-coenzyme A (acetyl-coA) and dimethylsulfoniopropionate (DMSP) as substrates to produce DMS, acetate and 3-hydroxypropionate-CoA (3HP-CoA). Mediates the CoA-transferase prior to lyase activity. DMS is the principal form by which sulfur is transported from oceans to the atmosphere and is a key component of the ocean sulfur cycle. The protein is CoA-transferase/lyase DddD of Marinomonas sp. (strain MWYL1).